The chain runs to 502 residues: UTP--glucose-1-phosphate uridylyltransferase 2 (502 aa).

The segment at 1 to 20 (MMKPDLNSPLPQSPQLQAFG) is disordered. Residues 9 to 20 (PLPQSPQLQAFG) show a composition bias toward polar residues. UTP is bound by residues 114 to 117 (LNGG), Lys-128, Gln-191, and Gly-220. Residue 116-117 (GG) coordinates substrate. Residues His-221 and 249–251 (NVD) contribute to the substrate site. UTP-binding residues include Asp-251 and Lys-390.

The protein belongs to the UDPGP type 1 family.

It catalyses the reaction alpha-D-glucose 1-phosphate + UTP + H(+) = UDP-alpha-D-glucose + diphosphate. In terms of biological role, plays a central role as a glucosyl donor in cellular metabolic pathways. The chain is UTP--glucose-1-phosphate uridylyltransferase 2 (ugpB) from Dictyostelium discoideum (Social amoeba).